The following is a 287-amino-acid chain: Bifunctional protein FolD (287 aa).

NADP(+)-binding positions include 167-169 (GRS) and Thr192.

It belongs to the tetrahydrofolate dehydrogenase/cyclohydrolase family. Homodimer.

The enzyme catalyses (6R)-5,10-methylene-5,6,7,8-tetrahydrofolate + NADP(+) = (6R)-5,10-methenyltetrahydrofolate + NADPH. The catalysed reaction is (6R)-5,10-methenyltetrahydrofolate + H2O = (6R)-10-formyltetrahydrofolate + H(+). The protein operates within one-carbon metabolism; tetrahydrofolate interconversion. Its function is as follows. Catalyzes the oxidation of 5,10-methylenetetrahydrofolate to 5,10-methenyltetrahydrofolate and then the hydrolysis of 5,10-methenyltetrahydrofolate to 10-formyltetrahydrofolate. This is Bifunctional protein FolD from Sorangium cellulosum (strain So ce56) (Polyangium cellulosum (strain So ce56)).